A 170-amino-acid chain; its full sequence is CFA/I fimbrial subunit B (170 aa).

The first 23 residues, 1–23, serve as a signal peptide directing secretion; sequence MKFKKTIGAMALTTMFVAVSASA.

It belongs to the fimbrial CS1 protein family. As to quaternary structure, CFA/I fimbriae are rather rigid, thread-like filaments of 0.5-1 micrometer, with an apparent axial hole, and a diameter of 7 nanometers. A single CFA/I fimbria consists of about 100 identical protein subunits.

Its subcellular location is the fimbrium. Fimbriae (also called pili), polar filaments radiating from the surface of the bacterium to a length of 0.5-1.5 micrometers and numbering 100-300 per cell, enable bacteria to colonize the epithelium of specific host organs. The protein is CFA/I fimbrial subunit B (cfaB) of Escherichia coli O78:H11 (strain H10407 / ETEC).